The following is a 170-amino-acid chain: Large ribosomal subunit protein uL10 (170 aa).

This sequence belongs to the universal ribosomal protein uL10 family. Part of the ribosomal stalk of the 50S ribosomal subunit. The N-terminus interacts with L11 and the large rRNA to form the base of the stalk. The C-terminus forms an elongated spine to which L12 dimers bind in a sequential fashion forming a multimeric L10(L12)X complex.

Forms part of the ribosomal stalk, playing a central role in the interaction of the ribosome with GTP-bound translation factors. This chain is Large ribosomal subunit protein uL10, found in Chlamydia caviae (strain ATCC VR-813 / DSM 19441 / 03DC25 / GPIC) (Chlamydophila caviae).